Reading from the N-terminus, the 276-residue chain is Urease accessory protein UreD (276 aa).

Belongs to the UreD family. UreD, UreF and UreG form a complex that acts as a GTP-hydrolysis-dependent molecular chaperone, activating the urease apoprotein by helping to assemble the nickel containing metallocenter of UreC. The UreE protein probably delivers the nickel.

The protein localises to the cytoplasm. In terms of biological role, required for maturation of urease via the functional incorporation of the urease nickel metallocenter. This Paracidovorax citrulli (strain AAC00-1) (Acidovorax citrulli) protein is Urease accessory protein UreD.